The chain runs to 430 residues: Vitamin B6 salvage pathway transcriptional repressor PtsJ (430 aa).

The HTH gntR-type domain maps to 4 to 72; the sequence is GKTANEIFDS…GRNGTVIKGS (69 aa). Positions 32–51 form a DNA-binding region, H-T-H motif; sequence VRELASELKVNRNTVAAAYK. Residues 70–95 are disordered; the sequence is KGSPSPVALEGGDPHTPLHDLSGGNP. K282 carries the N6-(pyridoxal phosphate)lysine modification.

It in the C-terminal section; belongs to the class-I pyridoxal-phosphate-dependent aminotransferase family. As to quaternary structure, homodimer in both apo- and holo-forms.

Functionally, acts as a transcriptional repressor of the pdxK gene, encoding a pyridoxal kinase involved in the vitamin B6 salvage pathway. Also represses transcription of its own gene. Binds to the ptsJ-pdxK intergenic region, but does not bind pdxY and pdxH promoters. Among all six B6 vitamers, only pyridoxal 5'-phosphate (PLP) clearly binds to the protein and acts as an effector molecule for PtsJ, inducing a protein conformational change that increases affinity for DNA. Thus, PLP stabilizes protein-DNA interactions, reinforcing repression. The sequence is that of Vitamin B6 salvage pathway transcriptional repressor PtsJ from Salmonella typhimurium (strain LT2 / SGSC1412 / ATCC 700720).